The sequence spans 266 residues: Aliphatic sulfonates import ATP-binding protein SsuB (266 aa).

The ABC transporter domain occupies 23-244 (LALDAITKHY…RRGSAKLAEL (222 aa)). 55–62 (GRSGCGKS) is an ATP binding site.

This sequence belongs to the ABC transporter superfamily. Aliphatic sulfonates importer (TC 3.A.1.17.2) family. The complex is composed of two ATP-binding proteins (SsuB), two transmembrane proteins (SsuC) and a solute-binding protein (SsuA).

It is found in the cell inner membrane. The enzyme catalyses ATP + H2O + aliphatic sulfonate-[sulfonate-binding protein]Side 1 = ADP + phosphate + aliphatic sulfonateSide 2 + [sulfonate-binding protein]Side 1.. In terms of biological role, part of the ABC transporter complex SsuABC involved in aliphatic sulfonates import. Responsible for energy coupling to the transport system. In Pectobacterium atrosepticum (strain SCRI 1043 / ATCC BAA-672) (Erwinia carotovora subsp. atroseptica), this protein is Aliphatic sulfonates import ATP-binding protein SsuB.